The primary structure comprises 216 residues: ATP phosphoribosyltransferase (216 aa).

It belongs to the ATP phosphoribosyltransferase family. Short subfamily. In terms of assembly, heteromultimer composed of HisG and HisZ subunits.

Its subcellular location is the cytoplasm. It carries out the reaction 1-(5-phospho-beta-D-ribosyl)-ATP + diphosphate = 5-phospho-alpha-D-ribose 1-diphosphate + ATP. It participates in amino-acid biosynthesis; L-histidine biosynthesis; L-histidine from 5-phospho-alpha-D-ribose 1-diphosphate: step 1/9. Functionally, catalyzes the condensation of ATP and 5-phosphoribose 1-diphosphate to form N'-(5'-phosphoribosyl)-ATP (PR-ATP). Has a crucial role in the pathway because the rate of histidine biosynthesis seems to be controlled primarily by regulation of HisG enzymatic activity. This is ATP phosphoribosyltransferase from Acidovorax ebreus (strain TPSY) (Diaphorobacter sp. (strain TPSY)).